Reading from the N-terminus, the 224-residue chain is ATP-dependent dethiobiotin synthetase BioD (224 aa).

Mg(2+) is bound at residue Thr18. Lys39 is an active-site residue. Substrate is bound at residue Ser43. Residues Asp56 and Glu117 each contribute to the Mg(2+) site. Residues Asp56, 117–120, and 177–178 contribute to the ATP site; these read EGVG and NE.

The protein belongs to the dethiobiotin synthetase family. As to quaternary structure, homodimer. The cofactor is Mg(2+).

It localises to the cytoplasm. It carries out the reaction (7R,8S)-7,8-diammoniononanoate + CO2 + ATP = (4R,5S)-dethiobiotin + ADP + phosphate + 3 H(+). It participates in cofactor biosynthesis; biotin biosynthesis; biotin from 7,8-diaminononanoate: step 1/2. Its function is as follows. Catalyzes a mechanistically unusual reaction, the ATP-dependent insertion of CO2 between the N7 and N8 nitrogen atoms of 7,8-diaminopelargonic acid (DAPA, also called 7,8-diammoniononanoate) to form a ureido ring. The chain is ATP-dependent dethiobiotin synthetase BioD from Xanthomonas axonopodis pv. citri (strain 306).